Consider the following 495-residue polypeptide: Bile acid-sensitive ion channel (495 aa).

Positions 1 to 30 are binds the plasma membrane and stabilizes the channel in the closed state; sequence MEHTEKSQVHAEKGLLGKIKRYLSKRPLPS. Topologically, residues 1 to 61 are cytoplasmic; that stretch reads MEHTEKSQVH…NIAQNQNKVR (61 aa). The helical transmembrane segment at 62–82 threads the bilayer; the sequence is KVIWLAVVLGSVSLLVWQIYS. Residues 83–459 lie on the Extracellular side of the membrane; it reads RLVNYFTWPT…GLFCGASLIT (377 aa). 6 disulfides stabilise this stretch: C112/C207, C185/C192, C298/C377, C315/C373, C328/C350, and C330/C342. N-linked (GlcNAc...) asparagine glycans are attached at residues N147, N163, and N179. 3 N-linked (GlcNAc...) asparagine glycosylation sites follow: N370, N405, and N421. The short motif at 454-456 is the GAS motif; ion selectivity filter element; that stretch reads GAS. The chain crosses the membrane as a helical span at residues 460–480; it reads IIEIIEYFFTNFYWVLIFFLL. Topologically, residues 481-495 are cytoplasmic; it reads KILETIQRTSPPQAV.

Belongs to the amiloride-sensitive sodium channel (TC 1.A.6) family. ASIC5 subfamily. Forms homotrimeric channels. In terms of tissue distribution, expressed by cholangiocytes (at protein level). Detected in cerebellum, brainstem, kidney, liver, hepatocytes, lung, intestine and embryo. In the cerebellum, restricted to interneurons in the granular layer, specifically in GRM1-expressing unipolar brush cells of the vestibulocerebellum.

Its subcellular location is the apical cell membrane. The protein localises to the cell membrane. The catalysed reaction is Na(+)(in) = Na(+)(out). It carries out the reaction Li(+)(in) = Li(+)(out). It catalyses the reaction K(+)(in) = K(+)(out). The enzyme catalyses H(+)(in) = H(+)(out). With respect to regulation, inhibited by the diuretic drug amiloride. Contrary to its rat ortholog it is not inhibited by Ca(2+). Functionally, forms bile acid-gated sodium channels and may play a role in bile acid-dependent absorption and secretion by epithelial cells of the bile ducts. Displays high selectivity for sodium ions but can also permit the permeation of other cations. The gating could be indirect and the consequence of alterations of the membrane environment of the channel by bile acids. As a sodium channel of type II unipolar brush cells of the vestibulocerebellum, controlling the electrical activity of these cells, could play a role in motor coordination and balance. In Mus musculus (Mouse), this protein is Bile acid-sensitive ion channel.